Here is a 123-residue protein sequence, read N- to C-terminus: Small ribosomal subunit protein uS12cz/uS12cy (123 aa).

This sequence belongs to the universal ribosomal protein uS12 family. In terms of assembly, part of the 30S ribosomal subunit.

The protein localises to the plastid. Its subcellular location is the chloroplast. Functionally, with S4 and S5 plays an important role in translational accuracy. Located at the interface of the 30S and 50S subunits. The protein is Small ribosomal subunit protein uS12cz/uS12cy (rps12-A) of Arabis hirsuta (Hairy rock-cress).